The sequence spans 5588 residues: Histone-lysine N-methyltransferase 2D (5588 aa).

The disordered stretch occupies residues 1 to 61; the sequence is MDSQKPPAED…QKPPHDCSRG (61 aa). The segment at 104–149 adopts a C2HC pre-PHD-type 1; degenerate zinc-finger fold; it reads GPCEAVLPKEDASQIGFPEGLTPAHLGEPGGHCWAHHWCAAWSAGV. PHD-type zinc fingers lie at residues 170–218 and 270–323; these read QRCS…PEHS and CPEC…CRLC. The segment at 226–276 adopts a PHD-type 2; degenerate zinc-finger fold; the sequence is EARCAVCEGPGQLCDLLFCTSCGHHYHGACLDTALTARKRASWQCPECKVC. An RING-type 1; atypical zinc finger spans residues 229–274; the sequence is CAVCEGPGQLCDLLFCTSCGHHYHGACLDTALTARKRASWQCPECK. The RING-type 2; degenerate zinc-finger motif lies at 276 to 321; the sequence is CQSCRKPGNDSKMLVCETCDKGYHTFCLKPPMEDLPAHSWKCKTCR. Disordered stretches follow at residues 438 to 908 and 922 to 1315; these read MPLL…SPII and LEYP…DDDT. The tract at residues 439–642 is 15 X 5 AA repeats of S/P-P-P-E/P-E/A; that stretch reads PLLPPPEESP…VSRLSPPPEE (204 aa). Residues 440–463 show a composition bias toward pro residues; that stretch reads LLPPPEESPLSPPPEESPTSPPPE. Repeat copies occupy residues 442 to 446, 460 to 464, 469 to 473, and 477 to 481. A compositionally biased stretch (low complexity) spans 464–475; that stretch reads ASRLSPPTEESP. 2 stretches are compositionally biased toward pro residues: residues 490–512 and 519–560; these read GCPP…PLSP and LSPP…PPPE. Repeat copies occupy residues 520–524, 529–533, 538–542, and 547–551. The segment covering 561–572 has biased composition (low complexity); it reads ASRLFPPFEESP. Residues 573 to 614 show a composition bias toward pro residues; that stretch reads LSPPPEDSPLSPPPEASRLSPPPEDSPMSPPPEDSPMSPPPE. Tandem repeats lie at residues 574–578, 583–587, 592–596, and 610–614. A compositionally biased stretch (low complexity) spans 619-636; it reads LPLPVLSHLSPLPEVSRL. Residues 637–641 form repeat 15; sequence SPPPE. The span at 637 to 677 shows a compositional bias: pro residues; the sequence is SPPPEESPLSPPPEDSPASPPPEASRLSPPPEDSPASPPPE. Positions 696–712 are enriched in low complexity; it reads DSLVSLPMEESPLSPLP. The residue at position 727 (S727) is a Phosphoserine. Low complexity-rich tracts occupy residues 735 to 755, 836 to 851, and 876 to 893; these read LCPQ…CLSP, PSQS…FSPS, and LPEE…LSPQ. Composition is skewed to pro residues over residues 894–908, 959–973, and 985–1012; these read LMPP…SPII, EPVP…PGSP, and LPPP…PPAL. Residues 1013-1023 show a composition bias toward low complexity; sequence PLSVPSPLSPV. Residues 1033–1045 are compositionally biased toward basic and acidic residues; the sequence is AELHEMETDKGPE. 3 PHD-type zinc fingers span residues 1071-1124, 1121-1171, and 1198-1253; these read PSPA…PMEV, PMEV…SQGD, and LGVS…SPAR. S1107 is subject to Phosphoserine. Over residues 1163–1172 the composition is skewed to polar residues; the sequence is EISNLSQGDA. An RING-type 3; atypical zinc finger spans residues 1201 to 1251; sequence STDVSPARDEGSLRLCTDSLPETDDSLLCDTGTATSGGKAEGDKGRRRSSP. S1205 carries the phosphoserine modification. T1223 carries the phosphothreonine modification. S1226 bears the Phosphoserine mark. The segment covering 1245–1258 has biased composition (basic residues); it reads GRRRSSPARSRIKQ. S1562 is modified (phosphoserine). Disordered stretches follow at residues 1566-1721, 1751-1846, 1886-1962, and 2095-2641; these read KRRQ…SKLE, GRPG…MESK, GLAL…SLQR, and SADG…QRQR. Residues 1593-1608 show a composition bias toward basic and acidic residues; it reads PDDKKDGDLDTDDLLK. The residue at position 1627 (S1627) is a Phosphoserine. Residues 1631–1641 are compositionally biased toward basic and acidic residues; the sequence is ELGKEETEESK. Basic residues-rich tracts occupy residues 1658–1668 and 1709–1718; these read RQRKSHTRVKR and KQQRRARKKS. Residues 1762-1782 show a composition bias toward basic and acidic residues; that stretch reads PRADGGSDRKELMTAMHKGDD. At S1791 the chain carries Phosphoserine. A Phosphothreonine modification is found at T1822. The segment covering 1831–1846 has biased composition (basic and acidic residues); the sequence is DLDRIPTEELPKMESK. Low complexity-rich tracts occupy residues 1886 to 1896 and 1936 to 1947; these read GLALGSLPSSS and TTPSTPTTPTTE. A compositionally biased stretch (pro residues) spans 2151–2166; the sequence is PTYPPYPSPTGAPAQP. Residues 2170–2181 are compositionally biased toward low complexity; that stretch reads GTTTRPGTGQPG. The residue at position 2196 (S2196) is a Phosphoserine. The residue at position 2197 (T2197) is a Phosphothreonine. An N6-acetyllysine modification is found at K2203. 2 positions are modified to phosphoserine: S2217 and S2231. Residues 2237–2249 are compositionally biased toward basic and acidic residues; that stretch reads ESRKSLEVKKEEL. Residues S2266, S2268, and S2299 each carry the phosphoserine modification. 2 stretches are compositionally biased toward pro residues: residues 2308 to 2322 and 2331 to 2359; these read EPPP…PPSH and YPDP…PPRS. Residues 2366–2388 are compositionally biased toward low complexity; sequence SRVPASPQSQSSSQSPLTPRPLS. The segment covering 2470 to 2486 has biased composition (polar residues); it reads GQPTNFARSPGTGTFVG. At R2492 the chain carries Asymmetric dimethylarginine. Positions 2504 to 2514 are enriched in pro residues; the sequence is LKPPVPQPGLP. A compositionally biased stretch (low complexity) spans 2546-2557; that stretch reads PSGSPLGPNSGP. S2597 carries the phosphoserine modification. A compositionally biased stretch (low complexity) spans 2610-2622; that stretch reads SSSSLATPELSSA. Residues 2627–2665 are a coiled coil; that stretch reads ISSLSQTELEKQRQRQRLRELLIRQQIQRNTLRQEKETA. Positions 2644–2648 match the LXXLL motif 1 motif; sequence LRELL. A disordered region spans residues 2655-2806; sequence RNTLRQEKET…QLWQQQQQQQ (152 aa). A compositionally biased stretch (low complexity) spans 2665 to 2680; it reads AAAAAGAVGPPGNWGA. 2 stretches are compositionally biased toward polar residues: residues 2691-2704 and 2739-2748; these read SRGQ…QDRS and PSSMDMNSRQ. Residues 2768 to 2813 adopt a coiled-coil conformation; the sequence is LQQQQQQQQQQQQQQQQQQQQQQQQQQQQQLWQQQQQQQQQQQQQA. Over residues 2769 to 2806 the composition is skewed to low complexity; sequence QQQQQQQQQQQQQQQQQQQQQQQQQQQQQLWQQQQQQQ. R2829 carries the post-translational modification Asymmetric dimethylarginine. Positions 3030–3034 match the LXXLL motif 2 motif; it reads LDDLL. A disordered region spans residues 3069 to 3104; the sequence is NEKAEREALLRGVEPVSLGPEERPPPAPDNSEPRLT. The residue at position 3071 (K3071) is an N6-acetyllysine. Phosphoserine is present on residues S3122 and S3193. 2 disordered regions span residues 3129 to 3193 and 3271 to 3326; these read NTPK…LNPS and QQQQ…QSMV. Positions 3271 to 3284 are enriched in low complexity; the sequence is QQQQQQQQQQQQQQ. K3430 bears the N6-acetyllysine mark. 4 disordered regions span residues 3460–3496, 3593–3617, 3633–3661, and 3678–3704; these read SGGS…TFAQ, RNKQ…VLAV, LLPA…GGMV, and QQQQ…NLAL. The stretch at 3559 to 3613 forms a coiled coil; sequence EKLKLVTEQQSKIQKQLDQVRKQQKEHTNLMAEYRNKQQQQQQQQQQQQQQQHSA. Over residues 3596 to 3610 the composition is skewed to low complexity; the sequence is QQQQQQQQQQQQQQQ. The stretch at 3712 to 3747 forms a coiled coil; it reads RLLQERQLQLQQQRMQLAQKLQQQQQQQQQQQQQQH. R3725 bears the Asymmetric dimethylarginine mark. 2 disordered regions span residues 3760–3780 and 3808–3827; these read PGVQ…PSNH and LQQQ…QGPH. 2 coiled-coil regions span residues 3854–3883 and 3912–4052; these read RLLT…QQQQ and SLQQ…QVTL. Residues 4053 to 4249 are disordered; it reads GPGLPVKPLQ…QGPPGAGVMP (197 aa). Composition is skewed to low complexity over residues 4128–4159, 4172–4183, and 4226–4240; these read SQLL…PQPQ, GQQLGSGSSSES, and GSQP…QSGQ. R4255 is modified (asymmetric dimethylarginine). S4272 carries the post-translational modification Phosphoserine. The LXXLL motif 3 motif lies at 4279 to 4283; it reads LQALL. The tract at residues 4290–4452 is disordered; that stretch reads QSQAVRQTPP…SSLVPGHLDQ (163 aa). The span at 4294 to 4305 shows a compositional bias: polar residues; sequence VRQTPPFQEPGT. A compositionally biased stretch (low complexity) spans 4307 to 4322; the sequence is PSPLQGLLGCQPQPGG. The LXXLL motif 4 motif lies at 4310–4314; sequence LQGLL. Positions 4379 to 4391 are enriched in polar residues; that stretch reads QLPSPSAQLTPTH. S4410 bears the Phosphoserine mark. Positions 4432–4445 are enriched in polar residues; the sequence is DNLTEAQKPEQSSL. An LXXLL motif 5 motif is present at residues 4514-4518; the sequence is LQKLL. Position 4516 is an N6-acetyllysine (K4516). Disordered regions lie at residues 4553 to 4596, 4664 to 4716, and 4729 to 4778; these read LQGT…EDGV, KNNL…EGAL, and AALP…QLGS. Residues 4670–4684 are compositionally biased toward pro residues; it reads PPTPPSSLPPTPPPS. Position 4789 is a phosphoserine (S4789). Residue K4807 forms a Glycyl lysine isopeptide (Lys-Gly) (interchain with G-Cter in SUMO2) linkage. N6-acetyllysine is present on K4827. The RING-type 4; degenerate zinc finger occupies 4829-4874; that stretch reads KGSEVSVMLTVSAAAAKNLNGVMVAVAELLSMKIPNSYEVLFPDGP. The disordered stretch occupies residues 4877–4908; the sequence is AGLEPKKGEAEGPGGKEKGLSGKGPDTGPDWL. Positions 4879 to 4896 are enriched in basic and acidic residues; it reads LEPKKGEAEGPGGKEKGL. K4931 participates in a covalent cross-link: Glycyl lysine isopeptide (Lys-Gly) (interchain with G-Cter in SUMO2). The interval 4956 to 5031 is disordered; that stretch reads QLSAPPPEEP…SEDSRPPRLK (76 aa). Residues 4959-4982 are compositionally biased toward pro residues; sequence APPPEEPSPPPSPLAPSPASPPAE. Basic and acidic residues predominate over residues 5017–5027; that stretch reads RPPEESEDSRP. Residues 5041 to 5045 carry the LXXLL motif 6 motif; sequence LRLLL. A C2HC pre-PHD-type 2 zinc finger spans residues 5080–5120; sequence NRRCCFCHEEGDGATDGPARLLNLDLDLWVHLNCALWSTEV. The segment at 5141–5188 adopts a PHD-type 7 zinc-finger fold; it reads TKCSLCQRTGATSSCNRMRCPNVYHFACAIRAKCMFFKDKTMLCPVHK. Positions 5226–5286 constitute an FYR N-terminal domain; the sequence is LHMFRVGGLV…CCYRCSISEN (61 aa). The region spanning 5287-5372 is the FYR C-terminal domain; it reads NGRPEFVIKV…ESCQNYLFRY (86 aa). Residues 5388-5393 carry the WDR5 interaction motif (WIN) motif; that stretch reads GCARSE. The region spanning 5448-5564 is the SET domain; sequence NNVYLARSRI…KGEELTYDYQ (117 aa). S-adenosyl-L-methionine-binding positions include Y5502 and 5525–5526; that span reads NH. Zn(2+) contacts are provided by C5528, C5576, C5578, and C5583. One can recognise a Post-SET domain in the interval 5572 to 5588; it reads HKIPCHCGAWNCRKWMN.

The protein belongs to the class V-like SAM-binding methyltransferase superfamily. Histone-lysine methyltransferase family. TRX/MLL subfamily. As to quaternary structure, component of the MLL2 complex (also named ASCOM complex), at least composed of catalytic subunit KMT2D/MLL2, ASH2L, RBBP5, WDR5, NCOA6, DPY30, KDM6A, PAXIP1/PTIP, PAGR1 and alpha- and beta-tubulin. Forms a core complex with the evolutionary conserved subcomplex WRAD composed of WDR5, RBBP5, ASH2L/ASH2 and DPY30 subunits; WRAD differentially stimulates the methyltransferase activity. Interacts with ESR1; interaction is direct. Interacts (via WIN motif) with WDR5.

It is found in the nucleus. It catalyses the reaction L-lysyl(4)-[histone H3] + S-adenosyl-L-methionine = N(6)-methyl-L-lysyl(4)-[histone H3] + S-adenosyl-L-homocysteine + H(+). Its function is as follows. Histone methyltransferase that catalyzes methyl group transfer from S-adenosyl-L-methionine to the epsilon-amino group of 'Lys-4' of histone H3 (H3K4). Part of chromatin remodeling machinery predominantly forms H3K4me1 methylation marks at active chromatin sites where transcription and DNA repair take place. Acts as a coactivator for estrogen receptor by being recruited by ESR1, thereby activating transcription. The chain is Histone-lysine N-methyltransferase 2D (Kmt2d) from Mus musculus (Mouse).